The chain runs to 113 residues: MKKFVSLKKNSDFRNVYRFGVSAANRYLVLYKFPNKGLGRRFGFSISKKVGKAVCRNRLRRILKELCRFHLDRFSDDCDFVFIVRQTSSDQDFHQMEKHMWHVWGKLNKQEKN.

This sequence belongs to the RnpA family. In terms of assembly, consists of a catalytic RNA component (M1 or rnpB) and a protein subunit.

It catalyses the reaction Endonucleolytic cleavage of RNA, removing 5'-extranucleotides from tRNA precursor.. Functionally, RNaseP catalyzes the removal of the 5'-leader sequence from pre-tRNA to produce the mature 5'-terminus. It can also cleave other RNA substrates such as 4.5S RNA. The protein component plays an auxiliary but essential role in vivo by binding to the 5'-leader sequence and broadening the substrate specificity of the ribozyme. The sequence is that of Ribonuclease P protein component from Desulforamulus reducens (strain ATCC BAA-1160 / DSM 100696 / MI-1) (Desulfotomaculum reducens).